The following is a 205-amino-acid chain: Large ribosomal subunit protein uL4 (205 aa).

This sequence belongs to the universal ribosomal protein uL4 family. In terms of assembly, part of the 50S ribosomal subunit. Contacts proteins L15 and L34.

One of the primary rRNA binding proteins, this protein initially binds near the 5'-end of the 23S rRNA. It is important during the early stages of 50S assembly. Functionally, makes multiple contacts with different domains of the 23S rRNA in the assembled 50S subunit. In terms of biological role, this protein is located close to the polypeptide exit tunnel, and interacts with the modified macrolide azithromycin, which blocks the tunnel. This chain is Large ribosomal subunit protein uL4 (rplD), found in Deinococcus radiodurans (strain ATCC 13939 / DSM 20539 / JCM 16871 / CCUG 27074 / LMG 4051 / NBRC 15346 / NCIMB 9279 / VKM B-1422 / R1).